A 269-amino-acid polypeptide reads, in one-letter code: Protein MGF 110-1L (269 aa).

The signal sequence occupies residues 1–26 (MLGLQIFTLLSIPTLLYTYELELLDL). The stretch at 1-145 (MLGLQIFTLL…YVRKRSLQTV (145 aa)) is one A repeat. Over 27 to 116 (TRTPPEKELE…HEWHEAVIRK (90 aa)) the chain is Extracellular. N-linked (GlcNAc...) asparagine; by host glycosylation is present at asparagine 75. Residues 117–137 (WQKLLTYGFYLVGCVLVANYV) form a helical membrane-spanning segment. At 138–144 (RKRSLQT) the chain is on the cytoplasmic side. A helical transmembrane segment spans residues 145–165 (VMYLLVLLVIFFLLSQLMLYR). The stretch at 147 to 269 (YLLVLLVIFF…DNLMKKQDIM (123 aa)) is one B repeat. Topologically, residues 166–269 (ELEDKKHKIG…DNLMKKQDIM (104 aa)) are extracellular.

Belongs to the asfivirus MGF 110 family.

Its subcellular location is the host membrane. Functionally, plays a role in virus cell tropism, and may be required for efficient virus replication in macrophages. This is Protein MGF 110-1L from African swine fever virus (isolate Warthog/Namibia/Wart80/1980) (ASFV).